The following is a 245-amino-acid chain: Orotidine 5'-phosphate decarboxylase (245 aa).

Substrate-binding positions include aspartate 22, lysine 44, 71–80 (DLKFHDIPNT), threonine 131, arginine 192, glutamine 201, glycine 221, and arginine 222. Residue lysine 73 is the Proton donor of the active site.

It belongs to the OMP decarboxylase family. Type 1 subfamily. Homodimer.

It carries out the reaction orotidine 5'-phosphate + H(+) = UMP + CO2. The protein operates within pyrimidine metabolism; UMP biosynthesis via de novo pathway; UMP from orotate: step 2/2. Catalyzes the decarboxylation of orotidine 5'-monophosphate (OMP) to uridine 5'-monophosphate (UMP). The sequence is that of Orotidine 5'-phosphate decarboxylase from Escherichia coli (strain 55989 / EAEC).